The following is a 362-amino-acid chain: Chorismate synthase (362 aa).

Arg47 contacts NADP(+). Residues 124-126 (RAS), Gly286, 301-305 (KPTAT), and Arg327 each bind FMN.

This sequence belongs to the chorismate synthase family. Homotetramer. Requires FMNH2 as cofactor.

It carries out the reaction 5-O-(1-carboxyvinyl)-3-phosphoshikimate = chorismate + phosphate. The protein operates within metabolic intermediate biosynthesis; chorismate biosynthesis; chorismate from D-erythrose 4-phosphate and phosphoenolpyruvate: step 7/7. Its function is as follows. Catalyzes the anti-1,4-elimination of the C-3 phosphate and the C-6 proR hydrogen from 5-enolpyruvylshikimate-3-phosphate (EPSP) to yield chorismate, which is the branch point compound that serves as the starting substrate for the three terminal pathways of aromatic amino acid biosynthesis. This reaction introduces a second double bond into the aromatic ring system. In Prochlorococcus marinus (strain SARG / CCMP1375 / SS120), this protein is Chorismate synthase.